A 473-amino-acid polypeptide reads, in one-letter code: 1-aminocyclopropane-1-carboxylate synthase (473 aa).

Substrate contacts are provided by residues 84–85 (DY), Tyr-145, and Asp-151. N6-(pyridoxal phosphate)lysine is present on Lys-273.

It belongs to the class-I pyridoxal-phosphate-dependent aminotransferase family. In terms of assembly, homodimer. Pyridoxal 5'-phosphate is required as a cofactor.

It carries out the reaction S-adenosyl-L-methionine = 1-aminocyclopropane-1-carboxylate + S-methyl-5'-thioadenosine + H(+). It catalyses the reaction (2S)-2-amino-3-butenoate + H2O = 2-oxobutanoate + NH4(+). Its pathway is alkene biosynthesis; ethylene biosynthesis via S-adenosyl-L-methionine; ethylene from S-adenosyl-L-methionine: step 1/2. Inhibited by L-aminoethoxyvinylglycine (AVG). Inhibited by L-vinylglycine (L-VG). Inhibited by S-methylmethionine through a L-VG ketimine intermediate. Functionally, catalyzes the formation of 1-aminocyclopropane-1-carboxylate, a direct precursor of ethylene in higher plants. Also catalyzes the conversion of L-vinylglycine (L-VG) to alpha-ketobutyrate and ammonia. Can use S-methylmethionine as substrate. The sequence is that of 1-aminocyclopropane-1-carboxylate synthase from Malus domestica (Apple).